A 96-amino-acid polypeptide reads, in one-letter code: Co-chaperonin GroES (96 aa).

The protein belongs to the GroES chaperonin family. Heptamer of 7 subunits arranged in a ring. Interacts with the chaperonin GroEL.

The protein localises to the cytoplasm. In terms of biological role, together with the chaperonin GroEL, plays an essential role in assisting protein folding. The GroEL-GroES system forms a nano-cage that allows encapsulation of the non-native substrate proteins and provides a physical environment optimized to promote and accelerate protein folding. GroES binds to the apical surface of the GroEL ring, thereby capping the opening of the GroEL channel. This Actinobacillus pleuropneumoniae serotype 5b (strain L20) protein is Co-chaperonin GroES.